We begin with the raw amino-acid sequence, 137 residues long: Phospholipase A2 homolog PLA2-03 (137 aa).

The N-terminal stretch at 1–16 (MRTLWIVAVLLVGVEG) is a signal peptide. 7 disulfide bridges follow: Cys42-Cys131, Cys44-Cys60, Cys59-Cys111, Cys65-Cys137, Cys66-Cys104, Cys73-Cys97, and Cys91-Cys102. An important for membrane-damaging activities in eukaryotes and bacteria; heparin-binding region spans residues 121–133 (KKYKIFPKFLCKK).

The protein belongs to the phospholipase A2 family. Group II subfamily. K49 sub-subfamily. As to expression, expressed by the venom gland.

The protein localises to the secreted. Its function is as follows. Snake venom phospholipase A2 homolog that lacks enzymatic activity. Is myotoxic and displays edema-inducing activities in mouse paw. A model of myotoxic mechanism has been proposed: an apo Lys49-PLA2 is activated by the entrance of a hydrophobic molecule (e.g. fatty acid) at the hydrophobic channel of the protein leading to a reorientation of a monomer. This reorientation causes a transition between 'inactive' to 'active' states, causing alignment of C-terminal and membrane-docking sites (MDoS) side-by-side and putting the membrane-disruption sites (MDiS) in the same plane, exposed to solvent and in a symmetric position for both monomers. The MDoS region stabilizes the toxin on membrane by the interaction of charged residues with phospholipid head groups. Subsequently, the MDiS region destabilizes the membrane with penetration of hydrophobic residues. This insertion causes a disorganization of the membrane, allowing an uncontrolled influx of ions (i.e. calcium and sodium), and eventually triggering irreversible intracellular alterations and cell death. The chain is Phospholipase A2 homolog PLA2-03 from Ovophis okinavensis (Ryukyu Island pit viper).